The primary structure comprises 378 residues: Pseudouridine kinase (378 aa).

Pseudouridine contacts are provided by residues aspartate 12, threonine 26, 37-41 (GVARN), valine 38, asparagine 137, and lysine 166. Positions 181 and 237 each coordinate Mg(2+). Positions 237, 239, 242, 298, 306, and 310 each coordinate ATP. Residue aspartate 311 participates in pseudouridine binding.

This sequence belongs to the carbohydrate kinase PfkB family. As to quaternary structure, forms homodimers.

The protein localises to the peroxisome. The enzyme catalyses pseudouridine + ATP = psi-UMP + ADP + H(+). Catalyzes the phosphorylation of pseudouridine to pseudouridine 5'-phosphate (PsiMP). Catalyzes the first step in a pseudouridine degradation pathway. Acts together with the pseudouridine 5'-phosphate glycosidase PUMY in the peroxisome to prevent toxic pseudouridine monophosphate accumulation. The protein is Pseudouridine kinase of Arabidopsis thaliana (Mouse-ear cress).